The following is a 149-amino-acid chain: Transcriptional repressor NrdR (149 aa).

Residues 3-34 fold into a zinc finger; it reads CPFCGHAATQVIDTRMSEEGDTVRRRRRCESC. The ATP-cone domain maps to 49–139; it reads PAVVKKNGSR…VYRSFEDVSE (91 aa).

It belongs to the NrdR family. Requires Zn(2+) as cofactor.

Its function is as follows. Negatively regulates transcription of bacterial ribonucleotide reductase nrd genes and operons by binding to NrdR-boxes. This chain is Transcriptional repressor NrdR, found in Ralstonia nicotianae (strain ATCC BAA-1114 / GMI1000) (Ralstonia solanacearum).